The primary structure comprises 262 residues: Histone chaperone cia1 (262 aa).

The disordered stretch occupies residues 157-262 (IQWDNPDFDD…KPEEKPETSQ (106 aa)). 2 coiled-coil regions span residues 173–196 (DADE…EGEG) and 223–253 (KGSE…AEEK). 2 stretches are compositionally biased toward acidic residues: residues 173 to 219 (DADE…GEGE) and 226 to 242 (EEEE…EEES). Over residues 250–262 (AEEKPEEKPETSQ) the composition is skewed to basic and acidic residues.

This sequence belongs to the ASF1 family. Interacts with histone H3 and histone H4.

The protein resides in the nucleus. Histone chaperone that facilitates histone deposition and histone exchange and removal during nucleosome assembly and disassembly. In Schizosaccharomyces pombe (strain 972 / ATCC 24843) (Fission yeast), this protein is Histone chaperone cia1 (cia1).